Consider the following 470-residue polypeptide: 3-isopropylmalate dehydratase large subunit (470 aa).

[4Fe-4S] cluster is bound by residues C347, C407, and C410.

Belongs to the aconitase/IPM isomerase family. LeuC type 1 subfamily. Heterodimer of LeuC and LeuD. Requires [4Fe-4S] cluster as cofactor.

The catalysed reaction is (2R,3S)-3-isopropylmalate = (2S)-2-isopropylmalate. It functions in the pathway amino-acid biosynthesis; L-leucine biosynthesis; L-leucine from 3-methyl-2-oxobutanoate: step 2/4. Its function is as follows. Catalyzes the isomerization between 2-isopropylmalate and 3-isopropylmalate, via the formation of 2-isopropylmaleate. The chain is 3-isopropylmalate dehydratase large subunit from Shewanella amazonensis (strain ATCC BAA-1098 / SB2B).